The primary structure comprises 274 residues: MAD2L1-binding protein (274 aa).

The interaction with MAD2L1 stretch occupies residues 45–78 (ASEAFCPRDCMVPVVFPGPVSQEGCCQFTCELLK). Ser-102 carries the phosphoserine modification.

The protein belongs to the MAD2L1BP family. Interacts with MAD2L1.

The protein resides in the nucleus. Its subcellular location is the cytoplasm. It is found in the cytoskeleton. The protein localises to the spindle. May function to silence the spindle checkpoint and allow mitosis to proceed through anaphase by binding MAD2L1 after it has become dissociated from the MAD2L1-CDC20 complex. The protein is MAD2L1-binding protein (MAD2L1BP) of Homo sapiens (Human).